The following is a 159-amino-acid chain: Endoribonuclease YbeY (159 aa).

Positions 114, 118, and 124 each coordinate Zn(2+).

This sequence belongs to the endoribonuclease YbeY family. The cofactor is Zn(2+).

It localises to the cytoplasm. Its function is as follows. Single strand-specific metallo-endoribonuclease involved in late-stage 70S ribosome quality control and in maturation of the 3' terminus of the 16S rRNA. This Pectobacterium atrosepticum (strain SCRI 1043 / ATCC BAA-672) (Erwinia carotovora subsp. atroseptica) protein is Endoribonuclease YbeY.